The primary structure comprises 120 residues: NAD(P)H-quinone oxidoreductase subunit 3, chloroplastic (120 aa).

3 helical membrane passes run 3–23 (ILEG…IPVI), 64–84 (MFAL…PWAV), and 89–109 (LGLS…IGLV).

The protein belongs to the complex I subunit 3 family. As to quaternary structure, NDH is composed of at least 16 different subunits, 5 of which are encoded in the nucleus.

It is found in the plastid. Its subcellular location is the chloroplast thylakoid membrane. It catalyses the reaction a plastoquinone + NADH + (n+1) H(+)(in) = a plastoquinol + NAD(+) + n H(+)(out). The catalysed reaction is a plastoquinone + NADPH + (n+1) H(+)(in) = a plastoquinol + NADP(+) + n H(+)(out). In terms of biological role, NDH shuttles electrons from NAD(P)H:plastoquinone, via FMN and iron-sulfur (Fe-S) centers, to quinones in the photosynthetic chain and possibly in a chloroplast respiratory chain. The immediate electron acceptor for the enzyme in this species is believed to be plastoquinone. Couples the redox reaction to proton translocation, and thus conserves the redox energy in a proton gradient. The protein is NAD(P)H-quinone oxidoreductase subunit 3, chloroplastic of Nephroselmis olivacea (Green alga).